A 41-amino-acid polypeptide reads, in one-letter code: Large ribosomal subunit protein bL36 (41 aa).

Belongs to the bacterial ribosomal protein bL36 family.

This chain is Large ribosomal subunit protein bL36, found in Chelativorans sp. (strain BNC1).